Reading from the N-terminus, the 375-residue chain is MSNEAPEVEPHSKRRKKEASPSSSSGFLQSLPEAVAMICLARVSRLDHAALSLVSKSCRSMVLSPELYQTRSLIGYAEKFLYVCFCMPTDETLCCHEKINGNRSLNVLFLDCRSHKWHHVTSMRVARVSPEVSVVDGKINVWGGCKYKHYYDWGEVFDPKTQTWADMSIPKPVREEKIYVVDSWDVGSYYYLPSKSIWEKGNQDSKRSKDWCLIDKLIYSCGNDGGIYWCEAGELDWCDAVGIDWREVFGLEFLSKELRESRVVYFGGKMVKVWESYKIMYNISLNLEELLPETQLTNLTELGHNVLVFWEKLECCCDGFKILEIWCAEISLERWEGGEILGRCDWCHPILAINLLTVDPLFYHSMVLYSIPVDV.

Positions 1-27 (MSNEAPEVEPHSKRRKKEASPSSSSGF) are disordered. An F-box domain is found at 25-71 (SGFLQSLPEAVAMICLARVSRLDHAALSLVSKSCRSMVLSPELYQTR). One copy of the Kelch repeat lies at 138 to 183 (KINVWGGCKYKHYYDWGEVFDPKTQTWADMSIPKPVREEKIYVVDS).

This is Putative F-box/kelch-repeat protein At3g24610 from Arabidopsis thaliana (Mouse-ear cress).